A 112-amino-acid chain; its full sequence is cAMP-regulated phosphoprotein 19 (112 aa).

Position 1 is an N-acetylmethionine (Met1). A compositionally biased stretch (low complexity) spans 1-11 (MSAEVPEAASA). The segment at 1–49 (MSAEVPEAASAEEQKEMEDKVTSPEKAEEAKLKARYPHLGQKPGGSDFL) is disordered. Ser2 carries the post-translational modification N-acetylserine. Residues Ser2 and Ser23 each carry the phosphoserine modification. A compositionally biased stretch (basic and acidic residues) spans 12–32 (EEQKEMEDKVTSPEKAEEAKL). Residues Ser62 and Ser104 each carry the phosphoserine; by GWL modification. The interval 73 to 112 (KNKQLPTAAPDKTEVTGDHIPTPQDLPQRKPSLVASKLAG) is disordered. Ser104 carries the post-translational modification Phosphoserine; by PKA. N6-acetyllysine is present on Lys109.

The protein belongs to the endosulfine family. Interacts (when phosphorylated at Ser-62) with PPP2R2D. Interacts with SNCA. Interacts with PPP2R2A; the interaction is direct and this interaction inhibits PP2A activity. In terms of processing, phosphorylation at Ser-62 by MASTL/GWL during mitosis is essential for interaction with PPP2R2D (PR55-delta) and subsequent inactivation of PP2A. Phosphorylated by PKA.

It is found in the cytoplasm. Protein phosphatase inhibitor that specifically inhibits protein phosphatase 2A (PP2A) during mitosis. Inhibition of PP2A is enhanced when ARPP19 is phosphorylated. When phosphorylated at Ser-62 during mitosis, specifically interacts with PPP2R2D (PR55-delta) and inhibits its activity, leading to inactivation of PP2A, an essential condition to keep cyclin-B1-CDK1 activity high during M phase. May indirectly enhance GAP-43 expression. This is cAMP-regulated phosphoprotein 19 (ARPP19) from Homo sapiens (Human).